Consider the following 249-residue polypeptide: Ribosomal RNA small subunit methyltransferase G (249 aa).

3 residues coordinate S-adenosyl-L-methionine: G86, F91, and R178.

The protein belongs to the methyltransferase superfamily. RNA methyltransferase RsmG family.

Its subcellular location is the cytoplasm. Its function is as follows. Specifically methylates the N7 position of a guanine in 16S rRNA. The protein is Ribosomal RNA small subunit methyltransferase G of Bifidobacterium adolescentis (strain ATCC 15703 / DSM 20083 / NCTC 11814 / E194a).